Here is a 247-residue protein sequence, read N- to C-terminus: MIVLTQSGTLLFDQRFKLSKFLFVVIATGFPLLLQQASLIYGYNHEQIYRICRSFLHVLPLLNCKRGRISTSGLQLPRHLHYECLEWGLLCGTHPAIQIVGLTIVIKLDDPTTAAAYRSELLRVSSSSYIQNAAGLSNGWGHDMEAFVRNAICLLELRERSIPQSGLRDLMGNYQHLVRSLLDACKVDHFVPLDFQHRSLMLNFARLYNQLDLQGRAKSFRALTGFPVYVPSEDYLEGSFLQKELQE.

Residues 76–95 form the F-box-like domain; that stretch reads LPRHLHYECLEWGLLCGTHP.

The protein belongs to the polerovirus P0 protein family.

Functionally, suppressor of RNA-mediated gene silencing, also known as post-transcriptional gene silencing (PTGS), a mechanism of plant viral defense that limits the accumulation of viral RNAs. The P0 protein suppresses local PTGS using its F-box-like domain to mediate destabilization and degradation of the AGO1 protein, although not via an interaction with host SKP1A. Participates, together with the proteins P1 and P7, in the inhibition of the induction of aphid-induced host phytohormones. This could play a role in the attraction to the infected plants by aphids. The chain is Suppressor of silencing P0 from Potato leafroll virus (strain Potato/Scotland/strain 1/1984) (PLrV).